The sequence spans 32 residues: Unknown protein from spot 206 of 2D-PAGE of etiolated coleoptile (32 aa).

The chain is Unknown protein from spot 206 of 2D-PAGE of etiolated coleoptile from Zea mays (Maize).